Here is a 491-residue protein sequence, read N- to C-terminus: Cytosol aminopeptidase (491 aa).

Mn(2+)-binding residues include lysine 263 and aspartate 268. Lysine 275 is a catalytic residue. Aspartate 286, aspartate 345, and glutamate 347 together coordinate Mn(2+). Arginine 349 is an active-site residue.

This sequence belongs to the peptidase M17 family. The cofactor is Mn(2+).

The protein resides in the cytoplasm. The enzyme catalyses Release of an N-terminal amino acid, Xaa-|-Yaa-, in which Xaa is preferably Leu, but may be other amino acids including Pro although not Arg or Lys, and Yaa may be Pro. Amino acid amides and methyl esters are also readily hydrolyzed, but rates on arylamides are exceedingly low.. It catalyses the reaction Release of an N-terminal amino acid, preferentially leucine, but not glutamic or aspartic acids.. In terms of biological role, presumably involved in the processing and regular turnover of intracellular proteins. Catalyzes the removal of unsubstituted N-terminal amino acids from various peptides. The protein is Cytosol aminopeptidase (pepA) of Haemophilus influenzae (strain ATCC 51907 / DSM 11121 / KW20 / Rd).